Here is a 269-residue protein sequence, read N- to C-terminus: MTVEQREASRLGPLFDSCRAENRAALIGYLPTGYPDVNTSVRAMTELVESGCDIVEVGVPYSDPGMDGPTIQRATEAALSGGVRVRDALTAVESISKAGGRAVVMTYWNPVLRYGGDAFARDLAAAGGHGLITPDLIPDEAQQWLAASDAHGLDRIFLVAPSSTPERLANTVAASRGFVYAASTMGVTGARDAVSNAAPDLVARVKAVSDIPVGVGLGVRSREQAAEIGRYADGVIVGSALVSALGDGLPSLRSLTEELAAGVRQRKSP.

Residues glutamate 56 and aspartate 67 each act as proton acceptor in the active site.

This sequence belongs to the TrpA family. Tetramer of two alpha and two beta chains.

The catalysed reaction is (1S,2R)-1-C-(indol-3-yl)glycerol 3-phosphate + L-serine = D-glyceraldehyde 3-phosphate + L-tryptophan + H2O. It functions in the pathway amino-acid biosynthesis; L-tryptophan biosynthesis; L-tryptophan from chorismate: step 5/5. Its function is as follows. The alpha subunit is responsible for the aldol cleavage of indoleglycerol phosphate to indole and glyceraldehyde 3-phosphate. The protein is Tryptophan synthase alpha chain of Mycobacterium ulcerans (strain Agy99).